The primary structure comprises 543 residues: Dipeptide-binding protein DppE (543 aa).

The signal sequence occupies residues 1–22; it reads MKRVKKLWGMGLALGLSFALMG. Cys23 carries N-palmitoyl cysteine lipidation. Cys23 is lipidated: S-diacylglycerol cysteine.

Belongs to the bacterial solute-binding protein 5 family.

The protein resides in the cell membrane. Its function is as follows. Probably part of the ABC transporter DppBCDE involved in dipeptide transport. The sequence is that of Dipeptide-binding protein DppE (dppE) from Bacillus subtilis (strain 168).